The chain runs to 547 residues: Delta-guaiene synthase 2 (547 aa).

Residues D299, D303, and D444 each coordinate Mg(2+). The DDXXD motif signature appears at 299–303; the sequence is DDTYD.

This sequence belongs to the terpene synthase family. Requires Mg(2+) as cofactor.

It carries out the reaction (2E,6E)-farnesyl diphosphate = delta-guaiene + diphosphate. The catalysed reaction is (2E,6E)-farnesyl diphosphate = alpha-guaiene + diphosphate. Its pathway is secondary metabolite biosynthesis; terpenoid biosynthesis. Its function is as follows. Sesquiterpene synthase involved in the biosynthesis of delta-guaiene (53.7%) and alpha-guaiene (44.6%), two structures composed of five- and seven-membered rings. Also produces 1.7% of alpha-humulene. This is Delta-guaiene synthase 2 (C3) from Aquilaria crassna (Eagle wood).